The sequence spans 308 residues: Ribosomal RNA large subunit methyltransferase F (308 aa).

It belongs to the methyltransferase superfamily. METTL16/RlmF family.

Its subcellular location is the cytoplasm. It catalyses the reaction adenosine(1618) in 23S rRNA + S-adenosyl-L-methionine = N(6)-methyladenosine(1618) in 23S rRNA + S-adenosyl-L-homocysteine + H(+). Functionally, specifically methylates the adenine in position 1618 of 23S rRNA. This is Ribosomal RNA large subunit methyltransferase F from Escherichia coli O127:H6 (strain E2348/69 / EPEC).